The following is a 689-amino-acid chain: DNA ligase (689 aa).

Residues 35–39 (DEVYD), 84–85 (SL), and Glu122 contribute to the NAD(+) site. The active-site N6-AMP-lysine intermediate is the Lys124. NAD(+) is bound by residues Arg145, Glu182, Lys308, and Lys332. 4 residues coordinate Zn(2+): Cys426, Cys429, Cys444, and Cys449. The BRCT domain maps to 612 to 689 (TTEKSLNGKR…NETELIQMCR (78 aa)).

This sequence belongs to the NAD-dependent DNA ligase family. LigA subfamily. Requires Mg(2+) as cofactor. Mn(2+) serves as cofactor.

The enzyme catalyses NAD(+) + (deoxyribonucleotide)n-3'-hydroxyl + 5'-phospho-(deoxyribonucleotide)m = (deoxyribonucleotide)n+m + AMP + beta-nicotinamide D-nucleotide.. DNA ligase that catalyzes the formation of phosphodiester linkages between 5'-phosphoryl and 3'-hydroxyl groups in double-stranded DNA using NAD as a coenzyme and as the energy source for the reaction. It is essential for DNA replication and repair of damaged DNA. This is DNA ligase from Thermosynechococcus vestitus (strain NIES-2133 / IAM M-273 / BP-1).